The primary structure comprises 400 residues: MSRATKVVLAYSGGVDTSVCIPYLKNEWGVKEVITLAADLGQGDELEGVRKKALDSGAVESLVIDVIEPLIKEYAFPAIQANALYENRYPLATALARPLIAKILVEAAEKYGADAIAHGCTGKGNDQVRFDVAIAALNPQIKILAPAREWGMSREETIAYGEEYGIPAPVKKSSPYSIDKNLLGMAIEAGELEDPWVEPPEEVYGMTKAIADTPNEPEYIEIGFERGIPVSLNGQEMGGIELITKLNQIAGNHGIGRIDMIENRLVGIKSREIYESPAMWVLIQGHRDLESLTLTADVTRYKRGIEETYSQLVYNGLWFSPLKGALDAFIQQTQERVTGVVRVKLFKGNAMVVGRKSDNSLYSFDLATYGAEDEFDHKAAEGFIYVWGLPTRVWSEKLRG.

ATP-binding positions include 10–18 and Ala-38; that span reads AYSGGVDTS. Residue Tyr-89 participates in L-citrulline binding. Residue Gly-119 coordinates ATP. Residues Thr-121, Asn-125, and Asp-126 each coordinate L-aspartate. Position 125 (Asn-125) interacts with L-citrulline. 4 residues coordinate L-citrulline: Arg-129, Ser-177, Glu-262, and Tyr-274.

The protein belongs to the argininosuccinate synthase family. Type 1 subfamily. In terms of assembly, homotetramer.

It localises to the cytoplasm. The catalysed reaction is L-citrulline + L-aspartate + ATP = 2-(N(omega)-L-arginino)succinate + AMP + diphosphate + H(+). The protein operates within amino-acid biosynthesis; L-arginine biosynthesis; L-arginine from L-ornithine and carbamoyl phosphate: step 2/3. The polypeptide is Argininosuccinate synthase (Trichodesmium erythraeum (strain IMS101)).